A 127-amino-acid chain; its full sequence is Fatty acid-binding protein, liver (127 aa).

Position 1 is an N-acetylmethionine (M1). Residue S11 is modified to Phosphoserine. Residues K31 and K36 each carry the N6-succinyllysine modification. S39 is subject to Phosphoserine. Position 46 is an N6-succinyllysine (K46). Position 51 is a phosphothreonine (T51). 2 positions are modified to N6-succinyllysine: K57 and K78. K84 carries the post-translational modification N6-acetyllysine; alternate. K84 is subject to N6-succinyllysine; alternate. Position 90 is an N6-succinyllysine (K90). The residue at position 100 (S100) is a Phosphoserine. At K121 the chain carries N6-succinyllysine.

This sequence belongs to the calycin superfamily. Fatty-acid binding protein (FABP) family.

The protein resides in the cytoplasm. Functionally, plays a role in lipoprotein-mediated cholesterol uptake in hepatocytes. Binds cholesterol. Binds free fatty acids and their coenzyme A derivatives, bilirubin, and some other small molecules in the cytoplasm. May be involved in intracellular lipid transport. This chain is Fatty acid-binding protein, liver (Fabp1), found in Mus musculus (Mouse).